The following is a 430-amino-acid chain: 3-phosphoshikimate 1-carboxyvinyltransferase (430 aa).

Lys21, Ser22, and Arg26 together coordinate 3-phosphoshikimate. Lys21 is a binding site for phosphoenolpyruvate. Residues Gly92 and Arg120 each contribute to the phosphoenolpyruvate site. Ser165, Ser166, Gln167, Ser193, Asp314, and Lys341 together coordinate 3-phosphoshikimate. Residue Gln167 coordinates phosphoenolpyruvate. Asp314 serves as the catalytic Proton acceptor. Residues Arg345, Arg386, and Lys411 each coordinate phosphoenolpyruvate.

This sequence belongs to the EPSP synthase family. Monomer.

The protein localises to the cytoplasm. The catalysed reaction is 3-phosphoshikimate + phosphoenolpyruvate = 5-O-(1-carboxyvinyl)-3-phosphoshikimate + phosphate. Its pathway is metabolic intermediate biosynthesis; chorismate biosynthesis. Catalyzes the transfer of the enolpyruvyl moiety of phosphoenolpyruvate (PEP) to the 5-hydroxyl of shikimate-3-phosphate (S3P) to produce enolpyruvyl shikimate-3-phosphate and inorganic phosphate. This chain is 3-phosphoshikimate 1-carboxyvinyltransferase, found in Methanospirillum hungatei JF-1 (strain ATCC 27890 / DSM 864 / NBRC 100397 / JF-1).